Reading from the N-terminus, the 400-residue chain is EARP-interacting protein homolog (400 aa).

The segment at 95 to 114 (NNNSNNTNNNDNTNNNTNNN) is disordered. Low complexity predominate over residues 96–114 (NNSNNTNNNDNTNNNTNNN). WD repeat units lie at residues 138–178 (GHTG…NEPT), 227–267 (AHSE…DPVK), and 271–311 (GHNH…SAFN). Low complexity predominate over residues 314–333 (NNISNSNEQQHSQQPNEQQP). The segment at 314–348 (NNISNSNEQQHSQQPNEQQPQQPPQPVKQKKNKRN) is disordered. The stretch at 358-397 (EHEDSVYNISWSSSNFLFASLSYDGRFVVNNVPKEYSDIL) is one WD 4 repeat.

This sequence belongs to the WD repeat EIPR1 family.

This is EARP-interacting protein homolog from Dictyostelium discoideum (Social amoeba).